The sequence spans 399 residues: Elongation factor Tu (399 aa).

The 195-residue stretch at 10-204 (KPHVNIGTIG…AVDASIPEPE (195 aa)) folds into the tr-type G domain. The interval 19 to 26 (GHVDHGKT) is G1. Residue 19–26 (GHVDHGKT) participates in GTP binding. Residue threonine 26 participates in Mg(2+) binding. The tract at residues 60 to 64 (GITIN) is G2. A G3 region spans residues 81–84 (DCPG). Residues 81–85 (DCPGH) and 136–139 (NKCD) contribute to the GTP site. Positions 136-139 (NKCD) are G4. A G5 region spans residues 174 to 176 (SGL).

Belongs to the TRAFAC class translation factor GTPase superfamily. Classic translation factor GTPase family. EF-Tu/EF-1A subfamily. Monomer.

It localises to the cytoplasm. It carries out the reaction GTP + H2O = GDP + phosphate + H(+). In terms of biological role, GTP hydrolase that promotes the GTP-dependent binding of aminoacyl-tRNA to the A-site of ribosomes during protein biosynthesis. This is Elongation factor Tu from Prochlorococcus marinus (strain MIT 9515).